The chain runs to 341 residues: Glucokinase (341 aa).

7 to 12 (GDIGGT) provides a ligand contact to ATP.

Belongs to the bacterial glucokinase family.

The protein localises to the cytoplasm. The catalysed reaction is D-glucose + ATP = D-glucose 6-phosphate + ADP + H(+). This is Glucokinase from Nostoc punctiforme (strain ATCC 29133 / PCC 73102).